We begin with the raw amino-acid sequence, 449 residues long: MNVLTNFPYQHVLVLGLAKSGTAAANVLLQNHIQVTINDGMATLEDATVQKLQTMGAELVLGSHPISVLDGKDLIVKNPGIRYDNVIVEEAQRRGIPVISEVELVHYLTNQPVIGITGSNGKTTTTTLITEMLDRSNVSVKVAGNIGVVATEVASSLQSDEKMVMELSSFQLQGIDQLQFSTAVLLNLFEAHLDYHGSFENYVEAKCNIFKSQNKHDYLIYNADDDNVSAAIKTAEATKVPFSSSRPLADGAWMDDDFLYYKDEKIIAIRDIVLVGKHNMENILAAIATAKLNGATNEGIVQVLTTFSGVKHRLEFVGVINGRYIYNDSKATNILATKKALAAFNKNVVLLAGGLDRGNTFEELIPYLHHVKAMVVFGETAGKLKDAGVAANIPVIEKALDVQHAVEVAFALTDEQDTILLSPACASWDQYKTFEERGDMFIQALHRLK.

118-124 is an ATP binding site; it reads GSNGKTT.

It belongs to the MurCDEF family.

The protein resides in the cytoplasm. The enzyme catalyses UDP-N-acetyl-alpha-D-muramoyl-L-alanine + D-glutamate + ATP = UDP-N-acetyl-alpha-D-muramoyl-L-alanyl-D-glutamate + ADP + phosphate + H(+). Its pathway is cell wall biogenesis; peptidoglycan biosynthesis. In terms of biological role, cell wall formation. Catalyzes the addition of glutamate to the nucleotide precursor UDP-N-acetylmuramoyl-L-alanine (UMA). The chain is UDP-N-acetylmuramoylalanine--D-glutamate ligase from Oceanobacillus iheyensis (strain DSM 14371 / CIP 107618 / JCM 11309 / KCTC 3954 / HTE831).